Consider the following 425-residue polypeptide: UDP-N-acetylglucosamine 1-carboxyvinyltransferase (425 aa).

A phosphoenolpyruvate-binding site is contributed by 25 to 26 (KN). Arg95 is a UDP-N-acetyl-alpha-D-glucosamine binding site. Cys119 (proton donor) is an active-site residue. At Cys119 the chain carries 2-(S-cysteinyl)pyruvic acid O-phosphothioketal. UDP-N-acetyl-alpha-D-glucosamine-binding positions include 124–128 (RPVDQ), Asp306, and Ile328.

Belongs to the EPSP synthase family. MurA subfamily.

It is found in the cytoplasm. It catalyses the reaction phosphoenolpyruvate + UDP-N-acetyl-alpha-D-glucosamine = UDP-N-acetyl-3-O-(1-carboxyvinyl)-alpha-D-glucosamine + phosphate. It participates in cell wall biogenesis; peptidoglycan biosynthesis. In terms of biological role, cell wall formation. Adds enolpyruvyl to UDP-N-acetylglucosamine. This is UDP-N-acetylglucosamine 1-carboxyvinyltransferase from Thermus thermophilus (strain ATCC 27634 / DSM 579 / HB8).